Reading from the N-terminus, the 609-residue chain is Forkhead box protein O (609 aa).

Disordered stretches follow at residues 1-89 and 181-263; these read MDGF…KNSS and KSVR…SSCG. Phosphothreonine; by PKB/AKT1 is present on Thr-43. The span at 62-79 shows a compositional bias: polar residues; it reads TKASNQQLASGDPQQAMQ. The segment covering 80–89 has biased composition (low complexity); that stretch reads NANAAKKNSS. The segment at residues 94–200 is a DNA-binding region (fork-head); it reads WGNLSYADLI…ETSRYEKRRG (107 aa). The residue at position 189 (Ser-189) is a Phosphoserine; by PKB/AKT1. Composition is skewed to polar residues over residues 220–229 and 254–263; these read ATPSPSSSVS and RASSNASSCG. Ser-257 carries the post-translational modification Phosphoserine; by PKB/AKT1. Residues Ser-260, Ser-261, and Ser-266 each carry the phosphoserine modification. Disordered regions lie at residues 321 to 365 and 384 to 411; these read AASG…QGQG and RDGL…DSLN. Residues 327-339 are compositionally biased toward pro residues; the sequence is TQPPPPYQPPQQP. Polar residues predominate over residues 388 to 397; sequence SPNSVTTTMS.

In terms of assembly, interacts with melt.

The protein localises to the cytoplasm. It localises to the nucleus. Functionally, transcription factor involved in the regulation of the insulin signaling pathway. Consistently activates both the downstream target Thor\d4EBP and the feedback control target InR. Involved in negative regulation of the cell cycle, modulating cell growth and proliferation. In response to cellular stresses, such as nutrient deprivation or increased levels of reactive oxygen species, foxo is activated and inhibits growth through the action of target genes such as Thor. Foxo activated in the adult fat body can regulate lifespan in adults; an insulin peptide itself may function as one secondary messenger of insulin-regulated aging. Also regulates Lip4, homolog of human acid lipases, thereby acting as a key modulator of lipid metabolism by insulin signaling and integrates insulin responses to glucose and lipid homeostasis. The polypeptide is Forkhead box protein O (Drosophila virilis (Fruit fly)).